The chain runs to 183 residues: Inner membrane-spanning protein YciB (183 aa).

Transmembrane regions (helical) follow at residues 22 to 42 (IYAA…ITYL), 50 to 70 (MHLA…FFHD), 72 to 92 (AFIK…LIAS), 118 to 138 (VTWY…YIAF), and 148 to 168 (FKVF…VVYL).

The protein belongs to the YciB family.

It is found in the cell inner membrane. Plays a role in cell envelope biogenesis, maintenance of cell envelope integrity and membrane homeostasis. The chain is Inner membrane-spanning protein YciB from Shewanella frigidimarina (strain NCIMB 400).